Consider the following 768-residue polypeptide: Probable dipeptidyl peptidase 4 (768 aa).

The signal sequence occupies residues Met-1–Ala-17. Residues Asn-38, Asn-81, Asn-104, Asn-113, Asn-221, Asn-282, and Asn-468 are each glycosylated (N-linked (GlcNAc...) asparagine). Catalysis depends on Ser-616, which acts as the Charge relay system. Asn-668 carries N-linked (GlcNAc...) asparagine glycosylation. Catalysis depends on charge relay system residues Asp-693 and His-728.

It belongs to the peptidase S9B family.

It localises to the secreted. It carries out the reaction Release of an N-terminal dipeptide, Xaa-Yaa-|-Zaa-, from a polypeptide, preferentially when Yaa is Pro, provided Zaa is neither Pro nor hydroxyproline.. Extracellular dipeptidyl-peptidase which removes N-terminal dipeptides sequentially from polypeptides having unsubstituted N-termini provided that the penultimate residue is proline. The protein is Probable dipeptidyl peptidase 4 (dpp4) of Aspergillus clavatus (strain ATCC 1007 / CBS 513.65 / DSM 816 / NCTC 3887 / NRRL 1 / QM 1276 / 107).